Here is a 112-residue protein sequence, read N- to C-terminus: Large ribosomal subunit protein bL17 (112 aa).

This sequence belongs to the bacterial ribosomal protein bL17 family. In terms of assembly, part of the 50S ribosomal subunit. Contacts protein L32.

In Desulforudis audaxviator (strain MP104C), this protein is Large ribosomal subunit protein bL17.